The sequence spans 201 residues: Peptidyl-tRNA hydrolase (201 aa).

Tyr-14 serves as a coordination point for tRNA. Catalysis depends on His-19, which acts as the Proton acceptor. TRNA-binding residues include Tyr-64, Asn-66, and Asn-112.

This sequence belongs to the PTH family. As to quaternary structure, monomer.

The protein resides in the cytoplasm. The catalysed reaction is an N-acyl-L-alpha-aminoacyl-tRNA + H2O = an N-acyl-L-amino acid + a tRNA + H(+). Functionally, hydrolyzes ribosome-free peptidyl-tRNAs (with 1 or more amino acids incorporated), which drop off the ribosome during protein synthesis, or as a result of ribosome stalling. Its function is as follows. Catalyzes the release of premature peptidyl moieties from peptidyl-tRNA molecules trapped in stalled 50S ribosomal subunits, and thus maintains levels of free tRNAs and 50S ribosomes. The sequence is that of Peptidyl-tRNA hydrolase from Bradyrhizobium diazoefficiens (strain JCM 10833 / BCRC 13528 / IAM 13628 / NBRC 14792 / USDA 110).